The following is a 495-amino-acid chain: Leucine aminopeptidase 2 (495 aa).

The first 21 residues, 1–21 (MKSQLLSLAVAVSTISQGVVG), serve as a signal peptide directing secretion. A PA domain is found at 124-218 (PPANKIMAEL…EDGKNLASLV (95 aa)). Residues Asn-142 and Asn-235 are each glycosylated (N-linked (GlcNAc...) asparagine). Zn(2+)-binding residues include His-259 and Asp-271. N-linked (GlcNAc...) asparagine glycosylation is present at Asn-272. The active-site Proton acceptor is the Glu-303. Residues Glu-304 and Asp-332 each contribute to the Zn(2+) site. N-linked (GlcNAc...) asparagine glycosylation occurs at Asn-352. His-430 provides a ligand contact to Zn(2+).

Belongs to the peptidase M28 family. M28A subfamily. As to quaternary structure, monomer. Zn(2+) is required as a cofactor.

It is found in the secreted. Extracellular aminopeptidase that releases a wide variety of amino acids from natural peptides and contributes to pathogenicity. The sequence is that of Leucine aminopeptidase 2 (LAP2) from Trichophyton tonsurans (Scalp ringworm fungus).